The primary structure comprises 472 residues: Ribulose bisphosphate carboxylase large chain 1 (472 aa).

Positions 115 and 165 each coordinate substrate. Lysine 167 (proton acceptor) is an active-site residue. Lysine 169 contributes to the substrate binding site. Mg(2+) contacts are provided by lysine 193, aspartate 195, and glutamate 196. Lysine 193 bears the N6-carboxylysine mark. Residue histidine 286 is the Proton acceptor of the active site. Residues arginine 287, histidine 319, and serine 371 each coordinate substrate.

This sequence belongs to the RuBisCO large chain family. Type I subfamily. Heterohexadecamer of 8 large chains and 8 small chains. The cofactor is Mg(2+).

The enzyme catalyses 2 (2R)-3-phosphoglycerate + 2 H(+) = D-ribulose 1,5-bisphosphate + CO2 + H2O. It carries out the reaction D-ribulose 1,5-bisphosphate + O2 = 2-phosphoglycolate + (2R)-3-phosphoglycerate + 2 H(+). Functionally, ruBisCO catalyzes two reactions: the carboxylation of D-ribulose 1,5-bisphosphate, the primary event in carbon dioxide fixation, as well as the oxidative fragmentation of the pentose substrate. Both reactions occur simultaneously and in competition at the same active site. This chain is Ribulose bisphosphate carboxylase large chain 1, found in Hydrogenovibrio marinus.